The chain runs to 315 residues: Methionyl-tRNA formyltransferase (315 aa).

Residue 112 to 115 (SLLP) participates in (6S)-5,6,7,8-tetrahydrofolate binding.

This sequence belongs to the Fmt family.

The catalysed reaction is L-methionyl-tRNA(fMet) + (6R)-10-formyltetrahydrofolate = N-formyl-L-methionyl-tRNA(fMet) + (6S)-5,6,7,8-tetrahydrofolate + H(+). Functionally, attaches a formyl group to the free amino group of methionyl-tRNA(fMet). The formyl group appears to play a dual role in the initiator identity of N-formylmethionyl-tRNA by promoting its recognition by IF2 and preventing the misappropriation of this tRNA by the elongation apparatus. In Leptospira borgpetersenii serovar Hardjo-bovis (strain JB197), this protein is Methionyl-tRNA formyltransferase.